The following is a 562-amino-acid chain: 3-hydroxy-3-methylglutaryl-coenzyme A reductase 2 (562 aa).

Helical transmembrane passes span 32–56 (ALPLPLYLTNTFFLSLFFATVYFLL) and 77–100 (ICALIGFVASFIYLLGFCGIDLIF). Residues 101 to 146 (RSSSDDDVWVNDGMIPCNQSLDCREVLPIKPNSVDPPRESELDSVE) are linker. N118 carries an N-linked (GlcNAc...) asparagine glycan. Positions 147–562 (DEEIVKLVID…DIGPSSQVNR (416 aa)) are catalytic. The active-site Charge relay system is the E240. N304 carries an N-linked (GlcNAc...) asparagine glycan. Active-site charge relay system residues include K372 and D448. Catalysis depends on H544, which acts as the Proton donor. N-linked (GlcNAc...) asparagine glycosylation is present at N548. At S550 the chain carries Phosphoserine.

Belongs to the HMG-CoA reductase family. Restricted to young seedlings, roots, and inflorescences. Expressed in root tips, shoot apex, secretory zone of the stigma, microspores, mature pollen grains, gynoecium vascular tissue and fertilized ovules.

The protein resides in the endoplasmic reticulum membrane. The catalysed reaction is (R)-mevalonate + 2 NADP(+) + CoA = (3S)-3-hydroxy-3-methylglutaryl-CoA + 2 NADPH + 2 H(+). It participates in metabolic intermediate biosynthesis; (R)-mevalonate biosynthesis; (R)-mevalonate from acetyl-CoA: step 3/3. Regulated at the post-translational level in response to alterations of the sphingolipid and the sterol biosynthetic pathways. Its function is as follows. Catalyzes the synthesis of mevalonate. The specific precursor of all isoprenoid compounds present in plants. In Arabidopsis thaliana (Mouse-ear cress), this protein is 3-hydroxy-3-methylglutaryl-coenzyme A reductase 2 (HMG2).